Consider the following 85-residue polypeptide: Neutrophil elastase 2A (85 aa).

The region spanning 1-85 (IVGGRAAEPH…VAQGVFSFVR (85 aa)) is the Peptidase S1 domain. The active-site Charge relay system is Ser67.

The protein belongs to the peptidase S1 family. Elastase subfamily.

Functionally, may be involved in the degradation of connective tissue in chronic lung disease. The polypeptide is Neutrophil elastase 2A (Equus caballus (Horse)).